The primary structure comprises 447 residues: Elongation factor 1-alpha (447 aa).

The region spanning 5 to 230 (KTHINIVVIG…DQINEPKRPS (226 aa)) is the tr-type G domain. Residues 14 to 21 (GHVDSGKS) are G1. A GTP-binding site is contributed by 14 to 21 (GHVDSGKS). Lysine 55 is subject to N6,N6-dimethyllysine. The segment at 70-74 (GITID) is G2. Lysine 79 carries the post-translational modification N6,N6,N6-trimethyllysine. A G3 region spans residues 91–94 (DAPG). GTP is bound by residues 91 to 95 (DAPGH) and 153 to 156 (NKMD). The interval 153–156 (NKMD) is G4. N6,N6,N6-trimethyllysine is present on lysine 187. The segment at 194 to 196 (SGF) is G5. Position 261 is an N6-methyllysine (lysine 261). Position 289 is a 5-glutamyl glycerylphosphorylethanolamine (glutamate 289). Lysine 306 is subject to N6,N6,N6-trimethyllysine. The residue at position 362 (glutamate 362) is a 5-glutamyl glycerylphosphorylethanolamine. Lysine 396 carries the post-translational modification N6,N6,N6-trimethyllysine.

The protein belongs to the TRAFAC class translation factor GTPase superfamily. Classic translation factor GTPase family. EF-Tu/EF-1A subfamily.

Its subcellular location is the cytoplasm. In terms of biological role, this protein promotes the GTP-dependent binding of aminoacyl-tRNA to the A-site of ribosomes during protein biosynthesis. The sequence is that of Elongation factor 1-alpha (REFA1) from Oryza sativa subsp. japonica (Rice).